The chain runs to 239 residues: 1-(5-phosphoribosyl)-5-[(5-phosphoribosylamino)methylideneamino] imidazole-4-carboxamide isomerase (239 aa).

Asp8 acts as the Proton acceptor in catalysis. Asp129 (proton donor) is an active-site residue.

This sequence belongs to the HisA/HisF family.

It localises to the cytoplasm. The catalysed reaction is 1-(5-phospho-beta-D-ribosyl)-5-[(5-phospho-beta-D-ribosylamino)methylideneamino]imidazole-4-carboxamide = 5-[(5-phospho-1-deoxy-D-ribulos-1-ylimino)methylamino]-1-(5-phospho-beta-D-ribosyl)imidazole-4-carboxamide. The protein operates within amino-acid biosynthesis; L-histidine biosynthesis; L-histidine from 5-phospho-alpha-D-ribose 1-diphosphate: step 4/9. The sequence is that of 1-(5-phosphoribosyl)-5-[(5-phosphoribosylamino)methylideneamino] imidazole-4-carboxamide isomerase from Bacillus cereus (strain G9842).